The sequence spans 987 residues: UPF0182 protein Lxx09300 (987 aa).

A run of 7 helical transmembrane segments spans residues 17 to 37, 59 to 79, 108 to 128, 167 to 187, 206 to 226, 256 to 276, and 283 to 303; these read VWTT…FAGL, AAIA…WVVI, RLAM…SAAS, VGFA…TCYL, VQIS…VWLD, AVLA…AFTG, and VGTA…PWAI. Disordered regions lie at residues 700–719 and 886–947; these read RDDA…DPTL and TAGD…ALQQ. A compositionally biased stretch (low complexity) spans 705-719; it reads TTPNDPTSSPTDPTL. The span at 897 to 932 shows a compositional bias: gly residues; it reads GGSGGGSSGDAGSSAGGGSSGGGGSSAGGSSSGSGS. Over residues 933 to 947 the composition is skewed to low complexity; that stretch reads SGTQSNAALQRALQQ.

The protein belongs to the UPF0182 family.

Its subcellular location is the cell membrane. The chain is UPF0182 protein Lxx09300 from Leifsonia xyli subsp. xyli (strain CTCB07).